Here is a 386-residue protein sequence, read N- to C-terminus: Succinate--CoA ligase [ADP-forming] subunit beta (386 aa).

In terms of domain architecture, ATP-grasp spans 9–244; the sequence is KEILRSFGVP…LDEEDPAEVE (236 aa). Residues Lys-46, 53 to 55, Glu-99, Ala-102, and Glu-107 each bind ATP; that span reads GRG. Mg(2+) contacts are provided by Asn-199 and Asp-213. Residues Asn-264 and 321 to 323 contribute to the substrate site; that span reads GIM.

Belongs to the succinate/malate CoA ligase beta subunit family. As to quaternary structure, heterotetramer of two alpha and two beta subunits. Requires Mg(2+) as cofactor.

The catalysed reaction is succinate + ATP + CoA = succinyl-CoA + ADP + phosphate. The enzyme catalyses GTP + succinate + CoA = succinyl-CoA + GDP + phosphate. It functions in the pathway carbohydrate metabolism; tricarboxylic acid cycle; succinate from succinyl-CoA (ligase route): step 1/1. Succinyl-CoA synthetase functions in the citric acid cycle (TCA), coupling the hydrolysis of succinyl-CoA to the synthesis of either ATP or GTP and thus represents the only step of substrate-level phosphorylation in the TCA. The beta subunit provides nucleotide specificity of the enzyme and binds the substrate succinate, while the binding sites for coenzyme A and phosphate are found in the alpha subunit. The protein is Succinate--CoA ligase [ADP-forming] subunit beta of Acidovorax ebreus (strain TPSY) (Diaphorobacter sp. (strain TPSY)).